The chain runs to 152 residues: Acidic phospholipase A2 homolog textilotoxin D chain (152 aa).

Positions 1-19 are cleaved as a signal peptide; the sequence is MHPAHLLVLLGVCVSLLGA. 7 cysteine pairs are disulfide-bonded: C38-C104, C54-C151, C56-C72, C71-C132, C78-C125, C88-C118, and C111-C123. A glycan (N-linked (GlcNAc...) asparagine) is linked at N112.

The protein belongs to the phospholipase A2 family. Group I subfamily. D49 sub-subfamily. Heterohexamer. 2 forms exist: 2 A or 2 B chains, 2 C chains and 2 covalently-linked D chains, and 1 A or 1 B, 1 C, 2 covalently-linked D chains and 2 differentially glycosylated covalently-linked D chains. Textilotoxin was originally described as pentameric. Expressed by the venom gland.

The protein resides in the secreted. Functionally, snake venom oligomeric phospholipase A2 that has potent presynaptic neurotoxicity. Chain D is not itself neurotoxic, but it is essential for the neurotoxicity of textilotoxin. Chain D possesses a very low phospholipase activity. This Pseudonaja textilis (Eastern brown snake) protein is Acidic phospholipase A2 homolog textilotoxin D chain.